The sequence spans 254 residues: tRNA pseudouridine synthase A (254 aa).

The Nucleophile role is filled by Asp52. A substrate-binding site is contributed by Tyr111.

The protein belongs to the tRNA pseudouridine synthase TruA family. As to quaternary structure, homodimer.

It carries out the reaction uridine(38/39/40) in tRNA = pseudouridine(38/39/40) in tRNA. Its function is as follows. Formation of pseudouridine at positions 38, 39 and 40 in the anticodon stem and loop of transfer RNAs. The polypeptide is tRNA pseudouridine synthase A (Methylobacterium nodulans (strain LMG 21967 / CNCM I-2342 / ORS 2060)).